The chain runs to 294 residues: tRNA dimethylallyltransferase (294 aa).

9–16 (GPTASGKS) is a binding site for ATP. Position 11-16 (11-16 (TASGKS)) interacts with substrate. The tract at residues 155–159 (QRVIR) is interaction with substrate tRNA.

This sequence belongs to the IPP transferase family. As to quaternary structure, monomer. Mg(2+) serves as cofactor.

The enzyme catalyses adenosine(37) in tRNA + dimethylallyl diphosphate = N(6)-dimethylallyladenosine(37) in tRNA + diphosphate. In terms of biological role, catalyzes the transfer of a dimethylallyl group onto the adenine at position 37 in tRNAs that read codons beginning with uridine, leading to the formation of N6-(dimethylallyl)adenosine (i(6)A). This Leuconostoc citreum (strain KM20) protein is tRNA dimethylallyltransferase.